Reading from the N-terminus, the 328-residue chain is Complex I intermediate-associated protein 30, mitochondrial (328 aa).

The N-terminal 24 residues, 1–24 (MSSIHKLLTGIYIHKNFLRPRAAL), are a transit peptide targeting the mitochondrion. Positions 44–54 (VTSVDRASQQG) are enriched in polar residues. Residues 44 to 80 (VTSVDRASQQGKTEEGLQGHDHKEVALDAPSPDRTPE) are disordered. A compositionally biased stretch (basic and acidic residues) spans 55–69 (KTEEGLQGHDHKEVA). Serine 319 carries the phosphoserine modification.

Belongs to the CIA30 family. As to quaternary structure, part of the mitochondrial complex I assembly/MCIA complex that comprises at least the core subunits TMEM126B, NDUFAF1, ECSIT and ACAD9 and complement subunits such as COA1 and TMEM186. Interacts with ECSIT. Interacts with ACAD9. At early stages of complex I assembly, it is found in intermediate subcomplexes that contain different subunits including NDUFB6, NDUFA6, NDUFA9, NDUFS3, NDUFS7, ND1, ND2 and ND3. Interacts with TMEM70 and TMEM242.

The protein resides in the mitochondrion. The protein localises to the mitochondrion matrix. As part of the MCIA complex, involved in the assembly of the mitochondrial complex I. This is Complex I intermediate-associated protein 30, mitochondrial from Mus musculus (Mouse).